The primary structure comprises 126 residues: uncharacterized protein (126 aa).

Thr68 is subject to Phosphothreonine.

This is an uncharacterized protein from Pseudomonas aeruginosa (strain UCBPP-PA14).